We begin with the raw amino-acid sequence, 277 residues long: Caspase-3 (277 aa).

Met-1 bears the N-acetylmethionine mark. 2 consecutive propeptides follow at residues 1–9 and 10–28; these read MENTENSVD and SKSI…KSVD. The residue at position 11 (Lys-11) is an N6-acetyllysine. Ser-26 bears the Phosphoserine mark. Catalysis depends on residues His-121 and Cys-163. Cys-163 is subject to S-nitrosocysteine; in inhibited form.

It belongs to the peptidase C14A family. Heterotetramer that consists of two anti-parallel arranged heterodimers, each one formed by a 17 kDa (p17) and a 12 kDa (p12) subunit. Interacts with BIRC6/bruce. In terms of processing, cleavage by granzyme B, caspase-6, caspase-8 and caspase-10 generates the two active subunits. Additional processing of the propeptides is likely due to the autocatalytic activity of the activated protease. Active heterodimers between the small subunit of caspase-7 protease and the large subunit of caspase-3 also occur and vice versa. S-nitrosylated on its catalytic site cysteine in unstimulated cell lines and denitrosylated upon activation of the Fas apoptotic pathway, associated with an increase in intracellular caspase activity. Fas therefore activates caspase-3 not only by inducing the cleavage of the caspase zymogen to its active subunits, but also by stimulating the denitrosylation of its active site thiol. Post-translationally, ubiquitinated by BIRC6; this activity is inhibited by DIABLO/SMAC.

The protein resides in the cytoplasm. It catalyses the reaction Strict requirement for an Asp residue at positions P1 and P4. It has a preferred cleavage sequence of Asp-Xaa-Xaa-Asp-|- with a hydrophobic amino-acid residue at P2 and a hydrophilic amino-acid residue at P3, although Val or Ala are also accepted at this position.. Inhibited by BIRC6; following inhibition of BIRC6-caspase binding by DIABLO/SMAC, BIRC6 is subjected to caspase cleavage, leading to an increase in active caspases. Involved in the activation cascade of caspases responsible for apoptosis execution. At the onset of apoptosis, it proteolytically cleaves poly(ADP-ribose) polymerase PARP1 at a '216-Asp-|-Gly-217' bond. Cleaves and activates sterol regulatory element binding proteins (SREBPs) between the basic helix-loop-helix leucine zipper domain and the membrane attachment domain. Cleaves and activates caspase-6, -7 and -9 (CASP6, CASP7 and CASP9, respectively). Cleaves and inactivates interleukin-18 (IL18). Triggers cell adhesion in sympathetic neurons through RET cleavage. Cleaves IL-1 beta between an Asp and an Ala, releasing the mature cytokine which is involved in a variety of inflammatory processes. Cleaves and inhibits serine/threonine-protein kinase AKT1 in response to oxidative stress. Acts as an inhibitor of type I interferon production during virus-induced apoptosis by mediating cleavage of antiviral proteins CGAS, IRF3 and MAVS, thereby preventing cytokine overproduction. Also involved in pyroptosis by mediating cleavage and activation of gasdermin-E (GSDME). Cleaves XRCC4 and phospholipid scramblase proteins XKR4, XKR8 and XKR9, leading to promote phosphatidylserine exposure on apoptotic cell surface. Cleaves BIRC6 following inhibition of BIRC6-caspase binding by DIABLO/SMAC. This is Caspase-3 (CASP3) from Macaca fascicularis (Crab-eating macaque).